The sequence spans 1501 residues: Inactive protein tyrosine kinase pTKL (1501 aa).

Residues Asn64, Asn128, and Asn133 are each glycosylated (N-linked (GlcNAc...) asparagine). The segment covering 204–221 has biased composition (basic residues); that stretch reads KKNKKNKKNKKKKNKKTK. The tract at residues 204–223 is disordered; the sequence is KKNKKNKKNKKKKNKKTKNT. N-linked (GlcNAc...) asparagine glycans are attached at residues Asn239, Asn242, Asn258, and Asn327. Positions 257–273 are enriched in basic and acidic residues; sequence MNISLHEKNDKKNEKKN. The disordered stretch occupies residues 257 to 276; it reads MNISLHEKNDKKNEKKNEKK. Positions 301-366 constitute an SAM domain; the sequence is WSLREVIQWL…LQLIKNLQVM (66 aa). The disordered stretch occupies residues 392–425; that stretch reads NKNIKKGKNIKKEKKKKKEKNIKKEKKKKKKETK. A compositionally biased stretch (basic residues) spans 394–424; it reads NIKKGKNIKKEKKKKKEKNIKKEKKKKKKET. Residues 399-433 are a coiled coil; that stretch reads KNIKKEKKKKKEKNIKKEKKKKKKETKKFNNMDKK. 3 N-linked (GlcNAc...) asparagine glycosylation sites follow: Asn448, Asn463, and Asn471. Residues 483-486 carry the RVxF motif 1 motif; that stretch reads KVSF. Asn506 carries an N-linked (GlcNAc...) asparagine glycan. Positions 543–597 are enriched in low complexity; it reads QLSSPLSSPLSSPSPSSSPSSSPSSSPSSSPSSSPSPSSSPSPSSSPSSSPSSSP. Positions 543 to 607 are disordered; the sequence is QLSSPLSSPL…SSPPSPLSYK (65 aa). Asn652 carries N-linked (GlcNAc...) asparagine glycosylation. Residues 659-678 form a disordered region; it reads IKKSKSKYNNDKKEQKKLPL. The span at 666-675 shows a compositional bias: basic and acidic residues; that stretch reads YNNDKKEQKK. Asn681, Asn712, Asn737, Asn811, and Asn819 each carry an N-linked (GlcNAc...) asparagine glycan. ATP-binding positions include 836-844 and Lys864; that span reads QNINNFGKY. 4 N-linked (GlcNAc...) asparagine glycosylation sites follow: Asn1024, Asn1031, Asn1074, and Asn1157. In terms of domain architecture, Protein kinase spans 1088 to 1483; that stretch reads FHYQHNVLCG…HILKTISTLY (396 aa). The RVxF motif 2 signature appears at 1238–1241; sequence KVLF. Asn1382 carries an N-linked (GlcNAc...) asparagine glycan.

The protein belongs to the protein kinase superfamily. TKL Ser/Thr protein kinase family. Interacts (via RVxF motif 1 and/or 2) with phosphatase PP1C. May interact (via SAM domain) with SERA5 (via C-terminus).

The protein localises to the parasitophorous vacuole. It is found in the host cell membrane. It localises to the host cytoplasm. The protein resides in the host cytoskeleton. The sequence is that of Inactive protein tyrosine kinase pTKL from Plasmodium falciparum (isolate 3D7).